Consider the following 57-residue polypeptide: UPF0391 membrane protein BRADO5617 (57 aa).

The next 2 helical transmembrane spans lie at 1–21 (MLGWVVTFLVIALIAGILGFG) and 30–50 (IAKIIFFIAIVLFLVSAVVGL).

Belongs to the UPF0391 family.

The protein resides in the cell membrane. The polypeptide is UPF0391 membrane protein BRADO5617 (Bradyrhizobium sp. (strain ORS 278)).